The following is a 377-amino-acid chain: Succinyl-diaminopimelate desuccinylase 2 (377 aa).

Zn(2+) is bound at residue His62. The active site involves Asp64. Asp95 is a Zn(2+) binding site. Residue Glu129 is the Proton acceptor of the active site. Glu130, Glu158, and His350 together coordinate Zn(2+).

This sequence belongs to the peptidase M20A family. DapE subfamily. Homodimer. It depends on Zn(2+) as a cofactor. The cofactor is Co(2+).

The catalysed reaction is N-succinyl-(2S,6S)-2,6-diaminopimelate + H2O = (2S,6S)-2,6-diaminopimelate + succinate. It participates in amino-acid biosynthesis; L-lysine biosynthesis via DAP pathway; LL-2,6-diaminopimelate from (S)-tetrahydrodipicolinate (succinylase route): step 3/3. Its function is as follows. Catalyzes the hydrolysis of N-succinyl-L,L-diaminopimelic acid (SDAP), forming succinate and LL-2,6-diaminopimelate (DAP), an intermediate involved in the bacterial biosynthesis of lysine and meso-diaminopimelic acid, an essential component of bacterial cell walls. In Shewanella loihica (strain ATCC BAA-1088 / PV-4), this protein is Succinyl-diaminopimelate desuccinylase 2.